A 133-amino-acid chain; its full sequence is MADAFVGTWKLVDSKNFDDYMKSLGVGFATRQVASMTKPTTIIEKNGDTITIKTQSTFKNTEINFQLGIEFDEVTADDRKVKSLVTLDGGKLIHVQKWNGQETTLTRELVDGKLILTLTHGSVVSTRTYEKEA.

Position 2 is an N-acetylalanine (A2). A Phosphothreonine modification is found at T8. Y20 is modified (phosphotyrosine; by Tyr-kinases). At S23 the chain carries Phosphoserine. T30 is modified (phosphothreonine). S83 bears the Phosphoserine mark. 127 to 129 (RTY) contributes to the (9Z)-octadecenoate binding site. 127 to 129 (RTY) serves as a coordination point for hexadecanoate. An octadecanoate-binding site is contributed by 127-129 (RTY).

Belongs to the calycin superfamily. Fatty-acid binding protein (FABP) family.

The protein localises to the cytoplasm. Its function is as follows. FABPs are thought to play a role in the intracellular transport of long-chain fatty acids and their acyl-CoA esters. This chain is Fatty acid-binding protein, heart (Fabp3), found in Mus musculus (Mouse).